A 470-amino-acid chain; its full sequence is Uronate isomerase (470 aa).

It belongs to the metallo-dependent hydrolases superfamily. Uronate isomerase family.

The catalysed reaction is D-glucuronate = D-fructuronate. The enzyme catalyses aldehydo-D-galacturonate = keto-D-tagaturonate. The protein operates within carbohydrate metabolism; pentose and glucuronate interconversion. The polypeptide is Uronate isomerase (Salmonella heidelberg (strain SL476)).